The chain runs to 118 residues: Putative pterin-4-alpha-carbinolamine dehydratase (118 aa).

This sequence belongs to the pterin-4-alpha-carbinolamine dehydratase family.

It catalyses the reaction (4aS,6R)-4a-hydroxy-L-erythro-5,6,7,8-tetrahydrobiopterin = (6R)-L-erythro-6,7-dihydrobiopterin + H2O. This chain is Putative pterin-4-alpha-carbinolamine dehydratase, found in Xanthomonas oryzae pv. oryzae (strain PXO99A).